The chain runs to 173 residues: Myeloid-derived growth factor (173 aa).

Positions 1-31 (MAAPSGGWNGVGASLWAALLLGAVALRPAEA) are cleaved as a signal peptide.

This sequence belongs to the MYDGF family. In terms of tissue distribution, expressed in eosinophils (at protein level). Expressed in bone marrow cells. Expressed in synovial tissue. Found in synovial fluid of patients with arthropaties.

It localises to the secreted. The protein localises to the endoplasmic reticulum-Golgi intermediate compartment. Its subcellular location is the endoplasmic reticulum. The protein resides in the golgi apparatus. Its function is as follows. Bone marrow-derived monocyte and paracrine-acting protein that promotes cardiac myocyte survival and adaptive angiogenesis for cardiac protection and/or repair after myocardial infarction (MI). Stimulates endothelial cell proliferation through a MAPK1/3-, STAT3- and CCND1-mediated signaling pathway. Inhibits cardiac myocyte apoptosis in a PI3K/AKT-dependent signaling pathway. Involved in endothelial cell proliferation and angiogenesis. This Homo sapiens (Human) protein is Myeloid-derived growth factor.